Reading from the N-terminus, the 637-residue chain is Biosynthetic arginine decarboxylase (637 aa).

N6-(pyridoxal phosphate)lysine is present on K101. Residue 286–296 (FDVGGGLAVDY) coordinates substrate.

Belongs to the Orn/Lys/Arg decarboxylase class-II family. SpeA subfamily. Mg(2+) is required as a cofactor. The cofactor is pyridoxal 5'-phosphate.

It catalyses the reaction L-arginine + H(+) = agmatine + CO2. It participates in amine and polyamine biosynthesis; agmatine biosynthesis; agmatine from L-arginine: step 1/1. Catalyzes the biosynthesis of agmatine from arginine. The polypeptide is Biosynthetic arginine decarboxylase (Shewanella baltica (strain OS195)).